A 286-amino-acid polypeptide reads, in one-letter code: Simplagrin (286 aa).

The signal sequence occupies residues 1-20 (MKKFCLIFLLLALTALHVKG). The interval 17–179 (HVKGSPIPDE…GSSSGGEESA (163 aa)) is disordered. Composition is skewed to acidic residues over residues 24–69 (PDEE…DGQE) and 103–129 (VESG…TGGE). The N-linked (GlcNAc...) asparagine glycan is linked to asparagine 116. Over residues 166–177 (SNRAGSSSGGEE) the composition is skewed to low complexity.

It belongs to the aegyptin family. In terms of assembly, monomeric in solution; likely has an elongated non-globular form. Interacts with human and rat collagens (via a RGQOGVMGF peptide, where O is hydroxyproline). Post-translationally, not glycosylated. In terms of tissue distribution, salivary gland.

Its subcellular location is the secreted. In terms of biological role, inhibits host platelet aggregation induced by low concentrations of collagen via blocking the von Willebrand Factor (VWF) interaction with collagen. The protein is Simplagrin of Simulium nigrimanum (Black fly).